The chain runs to 330 residues: Aspartate--ammonia ligase (330 aa).

This sequence belongs to the class-II aminoacyl-tRNA synthetase family. AsnA subfamily.

The protein resides in the cytoplasm. It catalyses the reaction L-aspartate + NH4(+) + ATP = L-asparagine + AMP + diphosphate + H(+). It participates in amino-acid biosynthesis; L-asparagine biosynthesis; L-asparagine from L-aspartate (ammonia route): step 1/1. The protein is Aspartate--ammonia ligase of Escherichia coli (strain SMS-3-5 / SECEC).